The sequence spans 206 residues: Thymidylate kinase (206 aa).

Residue 11-18 (GIDGAGKT) coordinates ATP.

This sequence belongs to the thymidylate kinase family.

The enzyme catalyses dTMP + ATP = dTDP + ADP. In terms of biological role, phosphorylation of dTMP to form dTDP in both de novo and salvage pathways of dTTP synthesis. The sequence is that of Thymidylate kinase from Paraburkholderia phytofirmans (strain DSM 17436 / LMG 22146 / PsJN) (Burkholderia phytofirmans).